Reading from the N-terminus, the 277-residue chain is uncharacterized protein (277 aa).

32 to 39 (GPQGSGKS) contacts ATP.

Belongs to the GLYK kinase family.

Its subcellular location is the cytoplasm. It is found in the nucleus. Has a role in meiosis. This is an uncharacterized protein from Schizosaccharomyces pombe (strain 972 / ATCC 24843) (Fission yeast).